We begin with the raw amino-acid sequence, 467 residues long: Ribosomal protein uS12 methylthiotransferase RimO (467 aa).

The tract at residues 1-27 (MTSNPPDLRPDLAPKPTFGTAPRPDQP) is disordered. An MTTase N-terminal domain is found at 27-137 (PTLGMVSLGC…VLDAVHAAVP (111 aa)). [4Fe-4S] cluster is bound by residues cysteine 36, cysteine 72, cysteine 101, cysteine 168, cysteine 172, and cysteine 175. In terms of domain architecture, Radical SAM core spans 154 to 397 (LTPRHFSYLK…MEKAQAISEA (244 aa)). The region spanning 400–467 (ASKVGQTLQV…GEYDLWGALR (68 aa)) is the TRAM domain.

Belongs to the methylthiotransferase family. RimO subfamily. The cofactor is [4Fe-4S] cluster.

It is found in the cytoplasm. The enzyme catalyses L-aspartate(89)-[ribosomal protein uS12]-hydrogen + (sulfur carrier)-SH + AH2 + 2 S-adenosyl-L-methionine = 3-methylsulfanyl-L-aspartate(89)-[ribosomal protein uS12]-hydrogen + (sulfur carrier)-H + 5'-deoxyadenosine + L-methionine + A + S-adenosyl-L-homocysteine + 2 H(+). Its function is as follows. Catalyzes the methylthiolation of an aspartic acid residue of ribosomal protein uS12. This is Ribosomal protein uS12 methylthiotransferase RimO from Ruegeria sp. (strain TM1040) (Silicibacter sp.).